The primary structure comprises 402 residues: Acetyl-CoA acetyltransferase (402 aa).

The active-site Acyl-thioester intermediate is Cys-90. Residues Tyr-185 and Lys-230 each contribute to the CoA site. Tyr-185 is a K(+) binding site. Ala-250 serves as a coordination point for K(+). A CoA-binding site is contributed by Ser-251. Val-348 lines the K(+) pocket. Residues His-352 and Cys-382 each act as proton acceptor in the active site.

It belongs to the thiolase-like superfamily. Thiolase family. Homotetramer.

It is found in the cytoplasm. The protein localises to the cytosol. It carries out the reaction 2 acetyl-CoA = acetoacetyl-CoA + CoA. The protein operates within metabolic intermediate biosynthesis; (R)-mevalonate biosynthesis; (R)-mevalonate from acetyl-CoA: step 1/3. Functionally, acetyl-CoA acetyltransferase; part of the first module of ergosterol biosynthesis pathway that includes the early steps of the pathway, conserved across all eukaryotes, and which results in the formation of mevalonate from acetyl-coenzyme A (acetyl-CoA). ERG10 catalyzes the formation of acetoacetyl-CoA from acetyl-CoA. The first module starts with the action of the cytosolic acetyl-CoA acetyltransferase ERG10 that catalyzes the formation of acetoacetyl-CoA. The hydroxymethylglutaryl-CoA synthase ERG13 then condenses acetyl-CoA with acetoacetyl-CoA to form HMG-CoA. The 3-hydroxy-3-methylglutaryl-coenzyme A (HMG-CoA) reductase HMG1 finally reduces HMG-CoA to produce mevalonate. This Candida albicans (strain SC5314 / ATCC MYA-2876) (Yeast) protein is Acetyl-CoA acetyltransferase.